The primary structure comprises 324 residues: NAD kinase (324 aa).

The active-site Proton acceptor is the aspartate 89. NAD(+)-binding positions include 89-90 (DG), arginine 94, 163-164 (NE), aspartate 193, and 204-209 (TAYAFS).

The protein belongs to the NAD kinase family. Requires a divalent metal cation as cofactor.

The protein localises to the cytoplasm. The enzyme catalyses NAD(+) + ATP = ADP + NADP(+) + H(+). Involved in the regulation of the intracellular balance of NAD and NADP, and is a key enzyme in the biosynthesis of NADP. Catalyzes specifically the phosphorylation on 2'-hydroxyl of the adenosine moiety of NAD to yield NADP. The polypeptide is NAD kinase (Nocardia farcinica (strain IFM 10152)).